The primary structure comprises 397 residues: Argininosuccinate synthase (397 aa).

8-16 is a binding site for ATP; sequence AYSGGLDTS. Tyr87 contributes to the L-citrulline binding site. An ATP-binding site is contributed by Gly117. L-aspartate contacts are provided by Thr119, Asn123, and Asp124. Asn123 lines the L-citrulline pocket. Residues Arg127, Ser175, Glu259, and Tyr271 each coordinate L-citrulline.

Belongs to the argininosuccinate synthase family. Type 1 subfamily. As to quaternary structure, homotetramer.

It is found in the cytoplasm. It catalyses the reaction L-citrulline + L-aspartate + ATP = 2-(N(omega)-L-arginino)succinate + AMP + diphosphate + H(+). The protein operates within amino-acid biosynthesis; L-arginine biosynthesis; L-arginine from L-ornithine and carbamoyl phosphate: step 2/3. The sequence is that of Argininosuccinate synthase from Streptomyces griseus subsp. griseus (strain JCM 4626 / CBS 651.72 / NBRC 13350 / KCC S-0626 / ISP 5235).